Here is a 752-residue protein sequence, read N- to C-terminus: Zinc finger BED domain-containing protein RICESLEEPER 3 (752 aa).

Residues 106-166 (RKKSVVWEHF…ASCPMLKNED (61 aa)) form a BED-type zinc finger. Zn(2+) contacts are provided by Cys-129, Cys-132, His-153, and Cys-159. Residues 647–733 (ELEQYLEEAL…EALFCAKDWL (87 aa)) are HATC (Hobo-Ac-Tam3) domain.

Homodimer.

It localises to the nucleus. Transposase-like protein that is essential for plant growth and development. May regulate global gene expression by recruiting other cellular factors. This chain is Zinc finger BED domain-containing protein RICESLEEPER 3, found in Oryza sativa subsp. japonica (Rice).